A 443-amino-acid polypeptide reads, in one-letter code: Carboxypeptidase M (443 aa).

Residues 1 to 17 (MDFPCLWLGLLLPLVAA) form the signal peptide. Residues 21-311 (NYHRQEGMEA…ASLIEYIKQV (291 aa)) enclose the Peptidase M14 domain. N38 carries N-linked (GlcNAc...) asparagine glycosylation. The Zn(2+) site is built by H83 and E86. Residues N115 and N164 are each glycosylated (N-linked (GlcNAc...) asparagine). Cystine bridges form between C138–C285, C242–C284, and C341–C410. H190 serves as a coordination point for Zn(2+). The Proton donor/acceptor role is filled by E281. 2 N-linked (GlcNAc...) asparagine glycosylation sites follow: N363 and N384. The GPI-anchor amidated serine moiety is linked to residue S423. Residues 424–443 (AATKPSLFLFLVSLLHIFFK) constitute a propeptide, removed in mature form.

The protein belongs to the peptidase M14 family. It depends on Zn(2+) as a cofactor.

The protein resides in the cell membrane. It carries out the reaction Cleavage of C-terminal arginine or lysine residues from polypeptides.. Its activity is regulated as follows. Inhibited by O-phenanthroline and MGTA and activated by cobalt. In terms of biological role, specifically removes C-terminal basic residues (Arg or Lys) from peptides and proteins. It is believed to play important roles in the control of peptide hormone and growth factor activity at the cell surface, and in the membrane-localized degradation of extracellular proteins. The protein is Carboxypeptidase M (CPM) of Homo sapiens (Human).